A 398-amino-acid polypeptide reads, in one-letter code: MNLELLDPFSIPDYPEALTTTLKHGHATSIRFSTNGYHLASGLVNGSVVIWDLSTFSVSRVLTGHTRAIQSVCWSSCDRFLLTASRDWKCILWDLRDGSIVYQVVLSAPVWSASLHPHKINTFVASLLDESPQLIIVDDGIPKHKYLPTNPDIDENYSDRRNRSKHVTLVSFFHPSGEYILSGTSKGWFHVIDASTTKIRSSHRITSQSIKQIRLSFCKRFLIFNSTDRVIRTVSIQDLDNPEVEHKFQDVVNRLQWNSCGFSQTGEFVFATTYQMAHAIYVWERGMGSLVKILEGPKEELVDVDWHPVFPCVASVGLDSGSIYIWAVEQKESWSAFAPDFQELEENIEYEEPEDEFDIHDETGKSEEEEYFTSVVKILPHDSSAEQPFVMPPTLSSS.

WD repeat units follow at residues 22–61 (LKHGHATSIRFSTNGYHLASGLVNGSVVIWDLSTFSVSRV), 64–103 (GHTRAIQSVCWSSCDRFLLTASRDWKCILWDLRDGSIVYQ), 162–202 (NRSK…IRSS), 247–295 (KFQD…KILE), and 296–336 (GPKE…SWSA).

As to quaternary structure, component of the Set1 complex composed of ash2, sdc1, set1, shg1, spp1, swd1, swd2 and swd3.

It localises to the nucleus. Functionally, the Set1 complex specifically methylates 'Lys-4' of histone H3. The chain is Set1 complex component swd1 (swd1) from Schizosaccharomyces pombe (strain 972 / ATCC 24843) (Fission yeast).